A 216-amino-acid polypeptide reads, in one-letter code: Uracil phosphoribosyltransferase (216 aa).

30–34 (KNLVR) provides a ligand contact to GTP. Residues Arg-80, Arg-105, and 140 to 148 (DPMIATAST) each bind 5-phospho-alpha-D-ribose 1-diphosphate. Uracil-binding positions include Ile-203 and 208–210 (GDA). Asp-209 is a binding site for 5-phospho-alpha-D-ribose 1-diphosphate.

Belongs to the UPRTase family. Mg(2+) serves as cofactor.

It carries out the reaction UMP + diphosphate = 5-phospho-alpha-D-ribose 1-diphosphate + uracil. Its pathway is pyrimidine metabolism; UMP biosynthesis via salvage pathway; UMP from uracil: step 1/1. Allosterically activated by GTP. Functionally, catalyzes the conversion of uracil and 5-phospho-alpha-D-ribose 1-diphosphate (PRPP) to UMP and diphosphate. This chain is Uracil phosphoribosyltransferase, found in Saccharolobus islandicus (strain M.16.4 / Kamchatka #3) (Sulfolobus islandicus).